The sequence spans 129 residues: Small ribosomal subunit protein uS11 (129 aa).

It belongs to the universal ribosomal protein uS11 family. As to quaternary structure, part of the 30S ribosomal subunit. Interacts with proteins S7 and S18. Binds to IF-3.

Functionally, located on the platform of the 30S subunit, it bridges several disparate RNA helices of the 16S rRNA. Forms part of the Shine-Dalgarno cleft in the 70S ribosome. The sequence is that of Small ribosomal subunit protein uS11 from Staphylococcus haemolyticus (strain JCSC1435).